A 214-amino-acid chain; its full sequence is Reticulon-3-B (214 aa).

Residues 1 to 22 form a disordered region; it reads MAETSGPQSSHISSSSAGDKGS. Residues 26 to 214 enclose the Reticulon domain; sequence VRDLLYWRDV…LPGALKKKSE (189 aa). Transmembrane regions (helical) follow at residues 46–66 and 150–170; these read MVLLLSLAAFSIISVISYLVL and TYIGAVFNGITLLILGVLLAF.

Homodimer.

It is found in the endoplasmic reticulum membrane. Its subcellular location is the golgi apparatus membrane. May be involved in membrane trafficking in the early secretory pathway. This is Reticulon-3-B (rtn3-b) from Xenopus laevis (African clawed frog).